The chain runs to 374 residues: Chaperone protein DnaJ (374 aa).

Residues 5 to 70 enclose the J domain; it reads DFYEILGVSK…EKRSAYDRMG (66 aa). Residues 133–211 form a CR-type zinc finger; that stretch reads GCKKEISFTA…CHGNGVKDKS (79 aa). Zn(2+)-binding residues include Cys-146, Cys-149, Cys-163, Cys-166, Cys-185, Cys-188, Cys-199, and Cys-202. CXXCXGXG motif repeat units lie at residues 146–153, 163–170, 185–192, and 199–206; these read CDTCDGKG, CQTCHGQG, CPHCGGTG, and CSDCHGNG.

The protein belongs to the DnaJ family. As to quaternary structure, homodimer. The cofactor is Zn(2+).

The protein localises to the cytoplasm. Its function is as follows. Participates actively in the response to hyperosmotic and heat shock by preventing the aggregation of stress-denatured proteins and by disaggregating proteins, also in an autonomous, DnaK-independent fashion. Unfolded proteins bind initially to DnaJ; upon interaction with the DnaJ-bound protein, DnaK hydrolyzes its bound ATP, resulting in the formation of a stable complex. GrpE releases ADP from DnaK; ATP binding to DnaK triggers the release of the substrate protein, thus completing the reaction cycle. Several rounds of ATP-dependent interactions between DnaJ, DnaK and GrpE are required for fully efficient folding. Also involved, together with DnaK and GrpE, in the DNA replication of plasmids through activation of initiation proteins. The sequence is that of Chaperone protein DnaJ from Psychrobacter arcticus (strain DSM 17307 / VKM B-2377 / 273-4).